A 220-amino-acid chain; its full sequence is UPF0711 protein C18orf21 (220 aa).

The disordered stretch occupies residues 117–181; sequence SRSFVSTLKS…VSTCSSKNTS (65 aa). Residues 119–136 show a composition bias toward polar residues; sequence SFVSTLKSNPATPTSKLS. Residue S126 is modified to Phosphoserine. 2 positions are modified to phosphothreonine: T130 and T139. The span at 171-180 shows a compositional bias: low complexity; the sequence is SVSTCSSKNT.

The protein belongs to the UPF0711 family.

The chain is UPF0711 protein C18orf21 (C18orf21) from Homo sapiens (Human).